A 200-amino-acid chain; its full sequence is Putative biotin transporter BioYB (200 aa).

A run of 6 helical transmembrane segments spans residues 13–33 (LIGMFAALMAVGANITSVAPF), 36–56 (VAGIPLSMQPFFCLLAALLLG), 61–81 (AIAMIVYALVGLAGAPVFAQF), 90–110 (GKSGGFIISYIPAAFAAGWFL), 121–141 (FLIASLIGTAIMYLIGTTYMY), and 158–178 (WGFMIWFMVKDTALAVILSFI).

Belongs to the BioY family.

The protein resides in the cell membrane. In terms of biological role, putative biotin transporter. This chain is Putative biotin transporter BioYB (bioYB), found in Bacillus subtilis (strain 168).